We begin with the raw amino-acid sequence, 437 residues long: MAGGPPKALPSTGPHSLRDMPHPLAGSSSEEAVGGDSTPSPDLLMARSFGDKDLILPNGGTPAGTSSPASSSSLLNRLQLDDDIDGETRDLFVIVDDPKKHVCTMETYITYRITTKSTRVEFDLPEYSVRRRYQDFDWLRSKLEESQPTHLIPPLPEKFVVKGVVDRFSEEFVETRRKALDKFLKRITDHPVLSFNEHFNIFLTAKDLNAYKKQGIALLTRMGESVKHVTGGYKLRTRPLEFAAIGDYLDTFALKLGTIDRIAQRIIKEEIEYLVELREYGPVYSTWSALEGELAEPLEGVSACIGNCSTALEELTDDMTEDFLPVLREYILYSDSMKSVLKKRDQVQAEYEAKLEAVALRKEDRPKVPADVEKCQDRMECFNADLKADMERWQNNKRQDFRQLLMGMADKNIQYYEKCLMAWESIIPLLQEKQEAK.

Disordered regions lie at residues 1 to 44 and 54 to 73; these read MAGG…PDLL and LILP…SSSS. The residue at position 38 (Thr38) is a Phosphothreonine. Ser40 bears the Phosphoserine mark. A compositionally biased stretch (low complexity) spans 63-73; it reads AGTSSPASSSS. Residues 89-210 form the PX domain; that stretch reads RDLFVIVDDP…IFLTAKDLNA (122 aa). Positions 132, 134, 162, and 176 each coordinate a 1,2-diacyl-sn-glycero-3-phospho-(1D-myo-inositol-3-phosphate). The BAR domain occupies 234 to 437; it reads KLRTRPLEFA…PLLQEKQEAK (204 aa).

It belongs to the sorting nexin family. In terms of assembly, heterodimer; heterodimerizes with SNX4.

It is found in the early endosome membrane. Functionally, involved in the regulation of endocytosis and in several stages of intracellular trafficking. Together with SNX4, involved in autophagosome assembly. The polypeptide is Sorting nexin-30 (Homo sapiens (Human)).